The chain runs to 60 residues: UPF0434 protein ECA2555 (60 aa).

The protein belongs to the UPF0434 family.

In Pectobacterium atrosepticum (strain SCRI 1043 / ATCC BAA-672) (Erwinia carotovora subsp. atroseptica), this protein is UPF0434 protein ECA2555.